We begin with the raw amino-acid sequence, 1096 residues long: Cation-transporting ATPase 5 (1096 aa).

Residues 1–19 (MDSIELKQLVPENDSEPGT) are Cytoplasmic-facing. A helical transmembrane segment spans residues 20–41 (PRQLLFQHYDISNEETIGIKPF). Residues 42-47 (KSIPAK) are Lumenal-facing. A helical transmembrane segment spans residues 48 to 70 (VYILRVTEILTLGLLHLILTWLP). At 71–193 (EFRLKWIEAP…LVSTKKSIVT (123 aa)) the chain is on the cytoplasmic side. Residues 194-216 (ILLNEVLHPFYLFQAVSVLIWLC) form a helical membrane-spanning segment. Topologically, residues 217–220 (DSFV) are lumenal. Residues 221-238 (FYSCCIVFISSYSIFLSV) traverse the membrane as a helical segment. Topologically, residues 239 to 391 (KESKESENRI…NLRPSQLYLD (153 aa)) are cytoplasmic. The chain crosses the membrane as a helical span at residues 392–412 (SMSFLKTMAILSFVSIVFIAI). At 413–425 (YLNLYNASFGHVV) the chain is on the lumenal side. A helical transmembrane segment spans residues 426-447 (LRSLDVLTILVPPALPATLSVG). Topologically, residues 448–895 (IANSIARLSR…SLILSHRCFQ (448 aa)) are cytoplasmic. D480 functions as the 4-aspartylphosphate intermediate in the catalytic mechanism. Mg(2+) is bound by residues D838 and D842. The helical transmembrane segment at 896-915 (YMVLCAIVQFSGVFFLYLKN) threads the bilayer. The Lumenal portion of the chain corresponds to 916–922 (YNFNDNQ). The chain crosses the membrane as a helical span at residues 923-940 (FLFMDLLIIFPLSAAMSY). Residues 941-958 (FDPAQNLTSNRPNSTLFG) are Cytoplasmic-facing. Residues 959 to 982 (KGRVKDLGIQSVLIWLSHGLLTLI) form a helical membrane-spanning segment. Residues 983–1003 (LHELNWVELPEWQLEKSNTKN) are Lumenal-facing. A helical transmembrane segment spans residues 1004–1026 (VLVTSIFLLSSLQYLGICIGINQ). Residues 1027–1040 (SSEFLSPIWKKKTY) lie on the Cytoplasmic side of the membrane. A helical transmembrane segment spans residues 1041-1060 (VCLCTTIGLCNIYLCFANEN). Topologically, residues 1061 to 1075 (HIISRCLQITRLPTL) are lumenal. A helical membrane pass occupies residues 1076-1096 (YRFIILFMGVISCCLTSILNM).

It belongs to the cation transport ATPase (P-type) (TC 3.A.3) family. Type V subfamily.

The protein resides in the endoplasmic reticulum membrane. It is found in the golgi apparatus membrane. The enzyme catalyses ATP + H2O = ADP + phosphate + H(+). Functionally, plays a role in regulating calcium and manganese homeostasis responsible for cell cycle progression. The polypeptide is Cation-transporting ATPase 5 (cta5) (Schizosaccharomyces pombe (strain 972 / ATCC 24843) (Fission yeast)).